The sequence spans 452 residues: Phosphoglucosamine mutase (452 aa).

Catalysis depends on serine 104, which acts as the Phosphoserine intermediate. Positions 104, 244, 246, and 248 each coordinate Mg(2+). Serine 104 bears the Phosphoserine mark.

The protein belongs to the phosphohexose mutase family. Mg(2+) is required as a cofactor. In terms of processing, activated by phosphorylation.

The enzyme catalyses alpha-D-glucosamine 1-phosphate = D-glucosamine 6-phosphate. Its function is as follows. Catalyzes the conversion of glucosamine-6-phosphate to glucosamine-1-phosphate. This is Phosphoglucosamine mutase from Pediococcus pentosaceus (strain ATCC 25745 / CCUG 21536 / LMG 10740 / 183-1w).